Here is a 396-residue protein sequence, read N- to C-terminus: Cytochrome P450 121 (396 aa).

Residue Cys345 coordinates heme.

Belongs to the cytochrome P450 family. The cofactor is heme.

Its subcellular location is the cytoplasm. This Mycobacterium bovis (strain ATCC BAA-935 / AF2122/97) protein is Cytochrome P450 121 (cyp121).